A 483-amino-acid chain; its full sequence is 3-isopropylmalate dehydratase large subunit (483 aa).

[4Fe-4S] cluster-binding residues include C361, C424, and C427.

The protein belongs to the aconitase/IPM isomerase family. LeuC type 1 subfamily. Heterodimer of LeuC and LeuD. [4Fe-4S] cluster is required as a cofactor.

The enzyme catalyses (2R,3S)-3-isopropylmalate = (2S)-2-isopropylmalate. It functions in the pathway amino-acid biosynthesis; L-leucine biosynthesis; L-leucine from 3-methyl-2-oxobutanoate: step 2/4. Functionally, catalyzes the isomerization between 2-isopropylmalate and 3-isopropylmalate, via the formation of 2-isopropylmaleate. The protein is 3-isopropylmalate dehydratase large subunit of Polaromonas naphthalenivorans (strain CJ2).